We begin with the raw amino-acid sequence, 196 residues long: DNA polymerase epsilon subunit D (196 aa).

The disordered stretch occupies residues 125-196 (RKKEKLDSGE…ETRVQNLEQT (72 aa)). Residues 133–143 (GEVDADGDIDM) are compositionally biased toward acidic residues. Basic and acidic residues predominate over residues 144–159 (GEDKENVPVEKVKEHD). Residues 160–173 (EIEEQGDALQDVEE) are compositionally biased toward acidic residues. A compositionally biased stretch (basic and acidic residues) spans 174–188 (SSEKKQKTESQDVET). A Phosphoserine; by ATM or ATR modification is found at Ser183.

In terms of assembly, DNA polymerase epsilon is a heterotetramer consisting of POL2, DPB2, DPB3 and DPB4. Component of the ISW2 complex, which at least consists of ISW2, ITC1, DLS1 and DPB4.

It localises to the nucleus. In terms of biological role, as accessory component of the DNA polymerase epsilon (DNA polymerase II) participates in chromosomal DNA replication. It is required during synthesis of the leading and lagging DNA strands at the replication fork and binds at/or near replication origins and moves along DNA with the replication fork. It has 3'-5' proofreading exonuclease activity that correct errors arising during DNA replication. It is also involved in DNA synthesis during DNA repair. Also functions as a component of the ISW2 complex, which acts in remodeling the chromatin by catalyzing an ATP-dependent alteration in the structure of nucleosomal DNA. The ISW2 complex is involved in coordinating transcriptional repression and in inheritance of telomeric silencing. It is involved in repression of MAT a-specific genes, INO1, and early meiotic genes during mitotic growth dependent upon transcription factor UME6 and in a parallel pathway to the RPD3-SIN3 histone deacetylase complex. This chain is DNA polymerase epsilon subunit D (DPB4), found in Saccharomyces cerevisiae (strain ATCC 204508 / S288c) (Baker's yeast).